A 115-amino-acid polypeptide reads, in one-letter code: MSSSVPYDPYVPPEESNSGANPNSQNKTAALRQEIDDTVGIMRDNINKVAERGERLTSIEDKADNLAISAQGFKRGANRVRKQMWWKDLKMRMCLFLVVIILLVVIIVPIVVHFS.

Over residues 1–16 (MSSSVPYDPYVPPEES) the composition is skewed to low complexity. Positions 1–28 (MSSSVPYDPYVPPEESNSGANPNSQNKT) are disordered. Residues 1 to 93 (MSSSVPYDPY…MWWKDLKMRM (93 aa)) lie on the Cytoplasmic side of the membrane. Residues 17–28 (NSGANPNSQNKT) are compositionally biased toward polar residues. Residues 27 to 87 (KTAALRQEID…NRVRKQMWWK (61 aa)) enclose the v-SNARE coiled-coil homology domain. S58 is subject to Phosphoserine. A Glycyl lysine isopeptide (Lys-Gly) (interchain with G-Cter in ubiquitin) cross-link involves residue K62. Residue C94 is the site of S-palmitoyl cysteine attachment. Residues 94–112 (CLFLVVIILLVVIIVPIVV) traverse the membrane as a helical; Anchor for type IV membrane protein segment. Over 113–115 (HFS) the chain is Vesicular.

It belongs to the synaptobrevin family. Post-translationally, palmitoylated by SWF1.

It is found in the endomembrane system. In terms of biological role, SNC1 and SNC2 are vesicle-targeting proteins essential for normal secretory traffic between the Golgi and the plasma membrane. They may also be involved in vesicle fusion. The protein is Synaptobrevin homolog 2 (SNC2) of Saccharomyces cerevisiae (strain ATCC 204508 / S288c) (Baker's yeast).